The sequence spans 864 residues: Leucine--tRNA ligase (864 aa).

Residues 42–52 (PYPSGKLHMGH) carry the 'HIGH' region motif. The 'KMSKS' region signature appears at 619 to 623 (KMSKS). Lys-622 serves as a coordination point for ATP.

The protein belongs to the class-I aminoacyl-tRNA synthetase family.

The protein resides in the cytoplasm. The catalysed reaction is tRNA(Leu) + L-leucine + ATP = L-leucyl-tRNA(Leu) + AMP + diphosphate. The protein is Leucine--tRNA ligase of Wigglesworthia glossinidia brevipalpis.